Here is a 245-residue protein sequence, read N- to C-terminus: Type II restriction enzyme EcoRV (245 aa).

Glutamate 45, aspartate 74, and aspartate 90 together coordinate Mg(2+). Active-site residues include aspartate 74, aspartate 90, and lysine 92.

Homodimer. Mg(2+) serves as cofactor.

The catalysed reaction is Endonucleolytic cleavage of DNA to give specific double-stranded fragments with terminal 5'-phosphates.. A P subtype restriction enzyme that recognizes the double-stranded sequence 5'-GATATC-3' and cleaves after T-3. The sequence is that of Type II restriction enzyme EcoRV (ecoRVR) from Escherichia coli.